The primary structure comprises 245 residues: uncharacterized protein (245 aa).

This is an uncharacterized protein from Escherichia coli.